A 1125-amino-acid chain; its full sequence is RGS domain-containing serine/threonine-protein kinase A (1125 aa).

Disordered stretches follow at residues 1–77 (MKTS…GGNK), 96–191 (RRNS…IVDD), 276–416 (GISP…NNTN), and 455–480 (YVGG…PAPE). Composition is skewed to low complexity over residues 7-30 (SSNS…NNNN) and 37-66 (SSKS…LSSG). The segment covering 121–136 (LDSKPPKPFDEKDDPI) has biased composition (basic and acidic residues). Low complexity-rich tracts occupy residues 159–191 (QPQQ…IVDD) and 281–342 (NNNN…LNNS). Residues 343 to 361 (PRYLNSSSSPRSMQHLSSK) are compositionally biased toward polar residues. Residues 362-416 (ITTTTTTTTTTTTTTSDDNNGNTNNNISNNNNIINNSNNNSNSNNNNNNNINNTN) show a composition bias toward low complexity. The RGS domain maps to 487-603 (KFIETITDPT…ISSPFNPEWK (117 aa)). Positions 617-685 (TTTQPINNFN…NNSNGSNTSS (69 aa)) are enriched in low complexity. Disordered regions lie at residues 617 to 710 (TTTQ…KERS) and 723 to 762 (NLSN…SNNN). Residues 690–710 (ERLDNIKGNRERVDSNGKERS) are compositionally biased toward basic and acidic residues. Low complexity predominate over residues 723–735 (NLSNHSNSSSNSN). Basic and acidic residues predominate over residues 736–748 (GKDKDKDKDKNEN). Residues 749–762 (TTDNSNNNNNSNNN) are compositionally biased toward low complexity. Residues 842–1097 (VSIHKWIASG…YLESIIYPSV (256 aa)) enclose the Protein kinase domain. Residues 848-856 (IASGSSGRV) and Lys-869 each bind ATP. Asp-963 acts as the Proton acceptor in catalysis.

This sequence belongs to the protein kinase superfamily. TKL Ser/Thr protein kinase family. In terms of processing, autophosphorylated.

The protein localises to the cytoplasm. It is found in the cell membrane. It catalyses the reaction L-seryl-[protein] + ATP = O-phospho-L-seryl-[protein] + ADP + H(+). It carries out the reaction L-threonyl-[protein] + ATP = O-phospho-L-threonyl-[protein] + ADP + H(+). With respect to regulation, up-regulated by cAMP. Its function is as follows. Serine/threonine kinase involved in negative regulation of chemotaxis. The protein is RGS domain-containing serine/threonine-protein kinase A (rckA) of Dictyostelium discoideum (Social amoeba).